A 388-amino-acid polypeptide reads, in one-letter code: Beta-hexosaminidase LpqI (388 aa).

The N-terminal stretch at 1 to 19 (MAFPRTLAILAAAAALVVA) is a signal peptide. Cys20 is lipidated: N-palmitoyl cysteine. Cys20 is lipidated: S-diacylglycerol cysteine. Substrate-binding positions include Asp123, Arg131, Arg193, and 223-224 (KH). The active-site Proton donor/acceptor is the His236. The active-site Nucleophile is the Asp311.

Belongs to the glycosyl hydrolase 3 family.

Its subcellular location is the cell inner membrane. The enzyme catalyses Hydrolysis of terminal non-reducing N-acetyl-D-hexosamine residues in N-acetyl-beta-D-hexosaminides.. Its pathway is cell wall biogenesis; peptidoglycan recycling. Its function is as follows. Plays a role in peptidoglycan recycling by cleaving the terminal beta-1,4-linked N-acetylglucosamine (GlcNAc) from peptidoglycan fragments. Acts as a regulator for GlcNAc-MurNAc levels by cleaving disaccharides and allowing the breakdown of MurNAc. The sequence is that of Beta-hexosaminidase LpqI from Mycobacterium bovis (strain BCG / Pasteur 1173P2).